A 173-amino-acid chain; its full sequence is Inorganic pyrophosphatase (173 aa).

Positions 29, 43, and 55 each coordinate substrate. 3 residues coordinate Mg(2+): D65, D70, and D102. Y141 serves as a coordination point for substrate.

The protein belongs to the PPase family. As to quaternary structure, homohexamer. The cofactor is Mg(2+).

It localises to the cytoplasm. It catalyses the reaction diphosphate + H2O = 2 phosphate + H(+). In terms of biological role, catalyzes the hydrolysis of inorganic pyrophosphate (PPi) forming two phosphate ions. This chain is Inorganic pyrophosphatase, found in Rickettsia conorii (strain ATCC VR-613 / Malish 7).